The sequence spans 353 residues: Thiamine-phosphate synthase (353 aa).

Residues 1–128 (MELMVVEADA…ASTAAEIRYG (128 aa)) form a unknown region. The tract at residues 129–353 (LYDLEVRILE…ASRTLLQTLA (225 aa)) is thiamine-phosphate synthase. 4-amino-2-methyl-5-(diphosphooxymethyl)pyrimidine is bound by residues 185 to 189 (QYRRK) and Asn-217. Mg(2+)-binding residues include Asp-218 and Asp-237. Position 256 (Ser-256) interacts with 4-amino-2-methyl-5-(diphosphooxymethyl)pyrimidine. A 2-[(2R,5Z)-2-carboxy-4-methylthiazol-5(2H)-ylidene]ethyl phosphate-binding site is contributed by 282-284 (TKT). Lys-285 contributes to the 4-amino-2-methyl-5-(diphosphooxymethyl)pyrimidine binding site. Gly-312 serves as a coordination point for 2-[(2R,5Z)-2-carboxy-4-methylthiazol-5(2H)-ylidene]ethyl phosphate.

The protein belongs to the thiamine-phosphate synthase family. The cofactor is Mg(2+).

It carries out the reaction 2-[(2R,5Z)-2-carboxy-4-methylthiazol-5(2H)-ylidene]ethyl phosphate + 4-amino-2-methyl-5-(diphosphooxymethyl)pyrimidine + 2 H(+) = thiamine phosphate + CO2 + diphosphate. The catalysed reaction is 2-(2-carboxy-4-methylthiazol-5-yl)ethyl phosphate + 4-amino-2-methyl-5-(diphosphooxymethyl)pyrimidine + 2 H(+) = thiamine phosphate + CO2 + diphosphate. The enzyme catalyses 4-methyl-5-(2-phosphooxyethyl)-thiazole + 4-amino-2-methyl-5-(diphosphooxymethyl)pyrimidine + H(+) = thiamine phosphate + diphosphate. It participates in cofactor biosynthesis; thiamine diphosphate biosynthesis; thiamine phosphate from 4-amino-2-methyl-5-diphosphomethylpyrimidine and 4-methyl-5-(2-phosphoethyl)-thiazole: step 1/1. In terms of biological role, condenses 4-methyl-5-(beta-hydroxyethyl)thiazole monophosphate (THZ-P) and 2-methyl-4-amino-5-hydroxymethyl pyrimidine pyrophosphate (HMP-PP) to form thiamine monophosphate (TMP). In Synechococcus sp. (strain CC9311), this protein is Thiamine-phosphate synthase.